We begin with the raw amino-acid sequence, 551 residues long: Xylulose kinase (551 aa).

Residues histidine 114, arginine 185, aspartate 295, and asparagine 296 each coordinate substrate. Residues tryptophan 370, 456-457, and asparagine 460 contribute to the ATP site; that span reads GA.

The protein belongs to the FGGY kinase family. In terms of assembly, monomer.

It catalyses the reaction D-xylulose + ATP = D-xylulose 5-phosphate + ADP + H(+). Functionally, phosphorylates D-xylulose to produce D-xylulose 5-phosphate, a molecule that may play an important role in the regulation of glucose metabolism and lipogenesis. This is Xylulose kinase (Xylb) from Mus musculus (Mouse).